We begin with the raw amino-acid sequence, 265 residues long: tRNA pseudouridine synthase A (265 aa).

The active-site Nucleophile is Asp-53. Tyr-111 serves as a coordination point for substrate.

The protein belongs to the tRNA pseudouridine synthase TruA family. In terms of assembly, homodimer.

The catalysed reaction is uridine(38/39/40) in tRNA = pseudouridine(38/39/40) in tRNA. Functionally, formation of pseudouridine at positions 38, 39 and 40 in the anticodon stem and loop of transfer RNAs. The sequence is that of tRNA pseudouridine synthase A from Acinetobacter baumannii (strain SDF).